Consider the following 250-residue polypeptide: Endomucin (250 aa).

The first 20 residues, 1–20, serve as a signal peptide directing secretion; the sequence is MRLLQVTALFFLLSNSLCRG. Low complexity-rich tracts occupy residues 24–38 and 45–60; these read KALTETSTTKASATT and TNKSTGGTPPKGTTNS. Disordered stretches follow at residues 24–83 and 105–153; these read KALT…ETTT and NAVS…LTTA. N-linked (GlcNAc...) asparagine glycans are attached at residues Asn-46, Asn-115, and Asn-119. Composition is skewed to polar residues over residues 105–135 and 143–153; these read NAVSTLSSPQNKTENQSSIRTTEISGTNQLP and TETPSASLTTA. A helical membrane pass occupies residues 180–200; it reads VILPVVIALIVITVLVFTLVG. Positions 210-250 are disordered; it reads PGTPESGNDQPQSDKESVKLLTVKTISHESGEHSAQGKAKN. Phosphoserine is present on Ser-226.

Post-translationally, highly O-glycosylated. Sialic acid-rich glycoprotein.

The protein localises to the membrane. In terms of biological role, endothelial sialomucin, also called endomucin or mucin-like sialoglycoprotein, which interferes with the assembly of focal adhesion complexes and inhibits interaction between cells and the extracellular matrix. The chain is Endomucin (Emcn) from Rattus norvegicus (Rat).